A 43-amino-acid polypeptide reads, in one-letter code: Omega-agatoxin-Aa3c (43 aa).

3 cysteine pairs are disulfide-bonded: Cys2/Cys19, Cys9/Cys25, and Cys27/Cys38.

It belongs to the neurotoxin 04 (omega-agtx) family. 03 (type II/III omega-agtx) subfamily. As to expression, expressed by the venom gland.

It localises to the secreted. Functionally, omega-agatoxins are antagonists of voltage-gated calcium channels (Cav). The sequence is that of Omega-agatoxin-Aa3c from Agelenopsis aperta (North American funnel-web spider).